The chain runs to 453 residues: Cytochrome P450 monooxygenase PC-20 (453 aa).

A run of 2 helical transmembrane segments spans residues 5–25 (LGPF…LCVI) and 49–69 (LGVV…LFCV). Cysteine 387 contributes to the heme binding site.

It belongs to the cytochrome P450 family. Heme is required as a cofactor.

The protein localises to the membrane. Its pathway is secondary metabolite biosynthesis. Functionally, cytochrome P450 monooxygenase; part of the gene cluster that mediates the biosynthesis of the indole diterpenes penitrems. The geranylgeranyl diphosphate (GGPP) synthase penG catalyzes the first step in penitrem biosynthesis via conversion of farnesyl pyrophosphate and isopentyl pyrophosphate into geranylgeranyl pyrophosphate (GGPP). Condensation of indole-3-glycerol phosphate with GGPP by the prenyl transferase penC then forms 3-geranylgeranylindole (3-GGI). Epoxidation by the FAD-dependent monooxygenase penM leads to a epoxidized-GGI that is substrate of the terpene cyclase penB for cyclization to yield paspaline. Paspaline is subsequently converted to 13-desoxypaxilline by the cytochrome P450 monooxygenase penP, the latter being then converted to paxilline by the cytochrome P450 monooxygenase penQ. Paxilline is converted to beta-paxitriol via C-10 ketoreduction by the short-chain dehydrogenase PC-15 which can be monoprenylated at the C-20 by the indole diterpene prenyltransferase penD. A two-step elimination (acetylation and elimination) process performed by the O-acetyltransferase PC-16 and the P.simplicissimum ptmI-ortholog not yet identified in P.crustosum, leads to the production of the prenylated form of penijanthine. The FAD-linked oxidoreductase ptmO then converts the prenylated form of penijanthine into PC-M5 which is in turn transformed into PC-M4 by the aromatic dimethylallyltransferase PC-22. A series of oxidation steps involving 4 cytochrome P450 monooxygenases (PC-21, PC-05, PC-23, PC-20) and a FAD-dependent monooxygenase (PC-14) are required for the transformation of PC-M4 to penitrems A and E. Synthesis of these final products is proposed to proceed via penitrems D and C (PC-21, PC-05, PC-14) and penitrems B and F (PC-21, PC-05, PC-14, PC-23). This chain is Cytochrome P450 monooxygenase PC-20, found in Penicillium crustosum (Blue mold fungus).